Consider the following 41-residue polypeptide: Mu-conotoxin pn4c (41 aa).

The propeptide occupies 1–24 (DQPAERMQDDISSEHHPFFDPVKR).

This sequence belongs to the conotoxin M superfamily. Post-translationally, contains 3 disulfide bonds. They are not added, since framework IV presents two different connectivities (I-V, II-III, IV-VI and I-III, II-V, IV-VI). In terms of tissue distribution, expressed by the venom duct.

It is found in the secreted. Its function is as follows. Mu-conotoxins block voltage-gated sodium channels (Nav). Blocks reversibly sodium channels in molluskan neurons, but has no effect on sodium currents in bovine chromaffin cells or in rat brain synaptosomes. Induces paralysis in mollusks (C.retripictus). The polypeptide is Mu-conotoxin pn4c (Conus pennaceus (Feathered cone)).